A 283-amino-acid polypeptide reads, in one-letter code: Pantothenate synthetase (283 aa).

Methionine 30–histidine 37 contributes to the ATP binding site. Residue histidine 37 is the Proton donor of the active site. Glutamine 61 contacts (R)-pantoate. Residue glutamine 61 participates in beta-alanine binding. Glycine 149–aspartate 152 lines the ATP pocket. Glutamine 155 provides a ligand contact to (R)-pantoate. ATP-binding positions include valine 178 and phenylalanine 186–arginine 189.

It belongs to the pantothenate synthetase family. In terms of assembly, homodimer.

The protein localises to the cytoplasm. The enzyme catalyses (R)-pantoate + beta-alanine + ATP = (R)-pantothenate + AMP + diphosphate + H(+). It participates in cofactor biosynthesis; (R)-pantothenate biosynthesis; (R)-pantothenate from (R)-pantoate and beta-alanine: step 1/1. Catalyzes the condensation of pantoate with beta-alanine in an ATP-dependent reaction via a pantoyl-adenylate intermediate. This chain is Pantothenate synthetase, found in Proteus mirabilis (strain HI4320).